The primary structure comprises 611 residues: Probable inactive purple acid phosphatase 27 (611 aa).

Positions 1–18 (MARNFLLVLLWFIVQVSS) are cleaved as a signal peptide. Asn-263 and Asn-271 each carry an N-linked (GlcNAc...) asparagine glycan. Position 293 (Asp-293) interacts with Fe cation. Asn-314 carries N-linked (GlcNAc...) asparagine glycosylation. Positions 334 and 337 each coordinate Fe cation. Zn(2+) is bound at residue Asp-334. Positions 367, 456, and 498 each coordinate Zn(2+). Asn-367 serves as a coordination point for substrate. 498-500 (HVH) contacts substrate. His-500 contributes to the Fe cation binding site.

This sequence belongs to the metallophosphoesterase superfamily. Purple acid phosphatase family. As to quaternary structure, homodimer. Requires Fe cation as cofactor. Zn(2+) is required as a cofactor. As to expression, expressed in roots, stems, leaves, flowers and siliques.

The protein localises to the secreted. The sequence is that of Probable inactive purple acid phosphatase 27 (PAP27) from Arabidopsis thaliana (Mouse-ear cress).